We begin with the raw amino-acid sequence, 793 residues long: MPRVASVAAVLAALLPSALGQANTSYVDYNHEANPDLFPQCVATIELSFPDCENGPLSKTLVCDKSARPHDRAAALVSMFTLEELVNNTGNTGTGVPRLGLPKYQVWSESLHGVYRANWASEGDYSWATSFPQPILTMAALNRTLIHQIGDILSTQARAFSNVGRYGLDTYAPNINSFRHPVWGRGQETPGEDAYYLASTYAYEYITGIQGGVDPETLKLVATAKHYAGYDIENWDGHSRLGNDMQITQQDLSEYYTPQFLVSARDAKVHSVMCSYNAVNGVPSCSNSFFLQTLLRETFGFVEDGYVSGDCGAVYNAFNPHEYAANESSASADSIRAGTDIDCGTSYQYHFTNAFDEGEISRQDIERGVIRLYTNLVRLGYFDGNSSQYRDLTWSDVQTTDAWNISHEAAVEGTVLLKNDGTLPLADSIRSVALIGPWANATTQMQGNYYGPAPYLTSPLAALEASDLDVHYAFGTNISSTTTAGFADALAAARKADAIIFAGGIDNTIEGEALDRMNITWPGNQLDLINQLSALGKPLVVLQMGGGQVDSSALKHNTNVSALLWGGYPGQSGGTALLDIIRGVRAPAGRLVTTQYPAGYATQFPAIDMGLRPNGTNPGQTYMWYTGTPVYEFGHGLFYTTFEAKRASTATNHSSFNIEDLLTAPHPGYAYPQLRPFLNFTAHITNTGRTTSDYTAMLFANTTAGPAPHPNKWLVGFDRLGALEPGASQTMTFPITIDNVARTDELGNRVLYPGRYELALNNERSVVLRFTLTGEKAVLMKWPLEKQEIPPAA.

The first 20 residues, 1 to 20, serve as a signal peptide directing secretion; it reads MPRVASVAAVLAALLPSALG. N-linked (GlcNAc...) asparagine glycans are attached at residues Asn23, Asn87, and Asn142. Asp310 is an active-site residue. Residues Asn326, Asn385, Asn404, Asn440, Asn477, Asn518, Asn559, Asn614, Asn652, Asn679, and Asn701 are each glycosylated (N-linked (GlcNAc...) asparagine).

The protein belongs to the glycosyl hydrolase 3 family.

It is found in the secreted. The catalysed reaction is Hydrolysis of (1-&gt;4)-beta-D-xylans, to remove successive D-xylose residues from the non-reducing termini.. The protein operates within glycan degradation; xylan degradation. Xylan 1,4-beta-xylosidase involved in the hydrolysis of xylan, a major structural heterogeneous polysaccharide found in plant biomass representing the second most abundant polysaccharide in the biosphere, after cellulose. This chain is Probable exo-1,4-beta-xylosidase xlnD (xlnD), found in Aspergillus terreus (strain NIH 2624 / FGSC A1156).